The following is a 409-amino-acid chain: uncharacterized protein (409 aa).

10 consecutive transmembrane segments (helical) span residues 62–82 (FSLG…WVWI), 100–120 (LLLF…PEAF), 123–143 (MGLL…LFAL), 152–172 (ASFM…TFWI), 183–203 (VVLW…RYWV), 252–272 (GTPW…WIYF), 293–313 (AQYL…FTAV), 328–348 (YNFA…TMWM), 355–375 (VLPY…TLVP), and 376–396 (FVAN…VAVW).

The protein localises to the cell membrane. This is an uncharacterized protein from Rhizobium meliloti (strain 1021) (Ensifer meliloti).